A 187-amino-acid polypeptide reads, in one-letter code: Dihydrofolate reductase type A10 (187 aa).

Positions 2–174 (NISLIFANEL…YSLSIDKFVR (173 aa)) constitute a DHFR domain.

Belongs to the dihydrofolate reductase family. Homodimer.

It carries out the reaction (6S)-5,6,7,8-tetrahydrofolate + NADP(+) = 7,8-dihydrofolate + NADPH + H(+). Its pathway is cofactor biosynthesis; tetrahydrofolate biosynthesis; 5,6,7,8-tetrahydrofolate from 7,8-dihydrofolate: step 1/1. Key enzyme in folate metabolism. Catalyzes an essential reaction for de novo glycine and purine synthesis, and for DNA precursor synthesis. This chain is Dihydrofolate reductase type A10 (dfrA10), found in Escherichia coli.